The sequence spans 204 residues: Phosphoribosyl-dephospho-CoA transferase (204 aa).

Active-site residues include Asp-129 and Asp-131.

The protein belongs to the MdcG family.

It carries out the reaction apo-[malonate decarboxylase ACP] + 2'-(5''-triphospho-alpha-D-ribosyl)-3'-dephospho-CoA = holo-[malonate decarboxylase ACP] + diphosphate. Functionally, transfers 2'-(5-triphosphoribosyl)-3'-dephosphocoenzyme-A to the apo-[acyl-carrier-protein] of the malonate decarboxylase to yield holo-[acyl-carrier-protein]. The sequence is that of Phosphoribosyl-dephospho-CoA transferase from Pseudomonas putida (strain W619).